Consider the following 217-residue polypeptide: Translation initiation factor 6 (217 aa).

The protein belongs to the eIF-6 family.

In terms of biological role, binds to the 50S ribosomal subunit and prevents its association with the 30S ribosomal subunit to form the 70S initiation complex. In Methanococcoides burtonii (strain DSM 6242 / NBRC 107633 / OCM 468 / ACE-M), this protein is Translation initiation factor 6.